The following is a 272-amino-acid chain: Zinc finger protein 32 (272 aa).

Residues 50 to 65 (RREKLEQKSPESKALQ) show a composition bias toward basic and acidic residues. The disordered stretch occupies residues 50-69 (RREKLEQKSPESKALQEDSP). 3 consecutive C2H2-type zinc fingers follow at residues 76–98 (YDCQ…ERIH), 104–126 (FECT…QRIH), and 132–154 (YQCK…ERLH). The Zn(2+) site is built by Cys-78, Cys-81, His-94, His-98, Cys-106, Cys-109, His-122, His-126, Ser-140, Gln-143, Gly-156, Tyr-160, Phe-197, Lys-200, Leu-213, Ala-217, Cys-246, Cys-249, His-262, and Cys-266. 2 consecutive C2H2-type zinc fingers follow at residues 160-182 (YECA…RRVH) and 188-210 (YRCD…IRVH). The segment at 216–238 (YACSHCRKSFHTRGNCLLHGKVH) adopts a C2H2-type 6 zinc-finger fold. Residues 244-266 (YLCGQCGKSFTQRGSLAVHQRSC) form a CCHC-type zinc finger.

It belongs to the krueppel C2H2-type zinc-finger protein family.

It localises to the nucleus. Its function is as follows. May be involved in transcriptional regulation. This Mus musculus (Mouse) protein is Zinc finger protein 32 (Znf32).